The primary structure comprises 363 residues: Anhydro-N-acetylmuramic acid kinase (363 aa).

10–17 is an ATP binding site; sequence GTSLDGLD.

The protein belongs to the anhydro-N-acetylmuramic acid kinase family.

The enzyme catalyses 1,6-anhydro-N-acetyl-beta-muramate + ATP + H2O = N-acetyl-D-muramate 6-phosphate + ADP + H(+). It participates in amino-sugar metabolism; 1,6-anhydro-N-acetylmuramate degradation. Its pathway is cell wall biogenesis; peptidoglycan recycling. Catalyzes the specific phosphorylation of 1,6-anhydro-N-acetylmuramic acid (anhMurNAc) with the simultaneous cleavage of the 1,6-anhydro ring, generating MurNAc-6-P. Is required for the utilization of anhMurNAc either imported from the medium or derived from its own cell wall murein, and thus plays a role in cell wall recycling. Contributes to intrinsic fosfomycin resistance in P.putida. The protein is Anhydro-N-acetylmuramic acid kinase of Pseudomonas putida (strain ATCC 47054 / DSM 6125 / CFBP 8728 / NCIMB 11950 / KT2440).